The chain runs to 1807 residues: Atrochrysone carboxylic acid synthase Agnpks1 (1807 aa).

An N-terminal acylcarrier protein transacylase domain (SAT) region spans residues 41-173 (LFRELHNHSK…ITGAQVIRQA (133 aa)). The Ketosynthase family 3 (KS3) domain occupies 411 to 845 (QSKIAIVGMS…GGNTTILLEE (435 aa)). Active-site for beta-ketoacyl synthase activity residues include Cys-584, His-720, and His-763. The tract at residues 946–1265 (FTFTGQGASY…SLAALHCAGV (320 aa)) is malonyl-CoA:ACP transacylase (MAT) domain. Residues 1334-1653 (TSTVHQIIQE…RILLSRFFSA (320 aa)) form a product template (PT) domain region. Residues 1338 to 1473 (HQIIQESIDG…ATLIYGDPSE (136 aa)) are N-terminal hotdog fold. The PKS/mFAS DH domain maps to 1338–1648 (HQIIQESIDG…FRRYPRILLS (311 aa)). His-1370 (proton acceptor; for dehydratase activity) is an active-site residue. The interval 1500 to 1648 (VANRFNHQMA…FRRYPRILLS (149 aa)) is C-terminal hotdog fold. Catalysis depends on Asp-1559, which acts as the Proton donor; for dehydratase activity. One can recognise a Carrier domain in the interval 1732–1806 (DTTTAKAIQI…DLRSWLEEYY (75 aa)). Ser-1766 carries the O-(pantetheine 4'-phosphoryl)serine modification.

It catalyses the reaction holo-[ACP] + 8 malonyl-CoA + 8 H(+) = atrochrysone carboxyl-[ACP] + 8 CO2 + 8 CoA + 2 H2O. The protein operates within secondary metabolite biosynthesis. Its function is as follows. Non-reducing polyketide synthase; part of the gene cluster that mediates the biosynthesis of agnestins, dihydroxy-xanthone metabolites. The pathway begins with the assembly and cyclization of atrochrysone thioester by the non-reducing polyketide synthase Agnpks1. The atrochrysone carboxyl ACP thioesterase AgnL7 then breaks the thioester bond and releases the atrochrysone carboxylic acid as the first enzyme-free intermediate. The decarboxylase AgnL1 then catalyzes the concerted decarboxylation-elimination required to convert atochrysone carboxylic acid into emodin anthrone, which is further oxidized to emodin by the anthrone oxygenase AgnL2. Emodin then undergoes reduction catalyzed by the oxidoreductase AgnL4 to yield the dihydroquinone tautomer which is the substrate for reduction by the short chain dehydrogenase AgnL6 reduction to produce hydroxyketone, followed by AgnL8 dehydration and likely spontaneous autoxidation to chrysophanol. Baeyer-Villiger oxidation by the oxidase AgnL3 leads to monodictyphenone via cleavage of the C-10/C-10a bond of chrysophanol. Alternative cleavage at the C-4a/C-10 bond of chrysophanol also leads to the formation some cephalone F. Further conversion to agnestins A and B, requires reduction to dihydro-monodictyphenone, oxidation to agnestin C probably via an epoxide, and rearrangement to either agnestin A or agnestin B directly, although agnestin A or agnestin B can also interconvert. Within the cluster, AgnR1 is the only unassigned oxidoreductase present which could be involved in this conversion. However, AgnR1 seems not to be involved in this step, and thus genes involved in the proposed oxidation/reduction may be located elsewhere on the genome. Further agnestin A derivatives are probably formed by spontaneous decarboxylations, dehydrations and methanolysis reactions. The chain is Atrochrysone carboxylic acid synthase Agnpks1 from Paecilomyces divaricatus (Penicillium divaricatum).